Here is a 552-residue protein sequence, read N- to C-terminus: Tyrosine-protein kinase Src64B (552 aa).

The SH3 domain occupies 95–156 (VLKRVVVALY…PLNFVAEERS (62 aa)). The region spanning 162-259 (WFFENVLRKE…GLCHILSRPC (98 aa)) is the SH2 domain. A Protein kinase domain is found at 284–537 (IQLLRKLGRG…TFEFLNHYFE (254 aa)). Residues 290–298 (LGRGNFGEV) and Lys-312 each bind ATP. The Proton acceptor role is filled by Asp-404. Tyr-434 is subject to Phosphotyrosine; by autocatalysis.

This sequence belongs to the protein kinase superfamily. Tyr protein kinase family. SRC subfamily. Interacts with hzg. Phosphorylated. As to expression, after the first 8 hours of development, accumulates almost exclusively in neural tissues such as the brain, ventral nerve chord, and eye-antennal disks, and in differentiating smooth muscle.

It catalyses the reaction L-tyrosyl-[protein] + ATP = O-phospho-L-tyrosyl-[protein] + ADP + H(+). Functionally, tyrosine-protein kinase that may play a role in the development of neural tissue and smooth muscle. May contribute to tyrosine phosphorylation of Dscam1, a cell surface receptor involved in targeting of growing axons during eye morphogenesis. The chain is Tyrosine-protein kinase Src64B (Src64B) from Drosophila melanogaster (Fruit fly).